A 101-amino-acid polypeptide reads, in one-letter code: MGIRYLLVLVLVLLVLGCEVQGAHMPQQDEATSSSLFTQLQESLYGYWGTAKAAAQELYEKTYLTTMDEKIREIYNKSTAAVSTYAGIFTDQLLSMLKGDQ.

The first 22 residues, 1–22 (MGIRYLLVLVLVLLVLGCEVQG), serve as a signal peptide directing secretion. Residues 66–74 (TMDEKIREI) form a lipid binding region. The interval 78-101 (STAAVSTYAGIFTDQLLSMLKGDQ) is lipoprotein lipase cofactor.

The protein belongs to the apolipoprotein C2 family. Post-translationally, proapolipoprotein C-II is synthesized as a sialic acid containing glycoprotein which is subsequently desialylated prior to its proteolytic processing. Proapolipoprotein C-II, the major form found in plasma undergoes proteolytic cleavage of its N-terminal hexapeptide to generate apolipoprotein C-II, which occurs as the minor form in plasma.

It is found in the secreted. Its function is as follows. Component of chylomicrons, very low-density lipoproteins (VLDL), low-density lipoproteins (LDL), and high-density lipoproteins (HDL) in plasma. Plays an important role in lipoprotein metabolism as an activator of lipoprotein lipase. Both proapolipoprotein C-II and apolipoprotein C-II can activate lipoprotein lipase. The polypeptide is Apolipoprotein C-II (APOC2) (Phoca vitulina (Harbor seal)).